The chain runs to 520 residues: Zinc finger and BTB domain-containing protein 45 (520 aa).

A BTB domain is found at 33–96 (CDVTVRIREA…LYSGSLVVAQ (64 aa)). 2 disordered regions span residues 182–272 (PAPP…GGAG) and 337–372 (FHLG…PDAA). Over residues 206–225 (RGEEDDDEETDEETDAEEGE) the composition is skewed to acidic residues. The span at 342–363 (PGPPAPTPPTPSGPAPAPPPTF) shows a compositional bias: pro residues. 4 C2H2-type zinc fingers span residues 412 to 434 (YECS…MFIH), 440 to 462 (HQCA…MVTH), 468 to 490 (FQCA…MRTH), and 495 to 517 (APCP…LAAH).

Belongs to the krueppel C2H2-type zinc-finger protein family.

It is found in the nucleus. Functionally, may be involved in transcriptional regulation. In the central nervous system, may play a role in glial cell differentiation. In Mus musculus (Mouse), this protein is Zinc finger and BTB domain-containing protein 45.